Here is a 494-residue protein sequence, read N- to C-terminus: MKYHDLRDFLALLEQQGELKRITLPVDPYLEMTEIADRTLRAGGPALLFENPKGHTMPVLCNLFGTPKRVAMGMGQEDISALREVGKLLAFLKEPEPPRGFRDLFDKLPQFKQVLNMPTKRLRNAPCQEKVWQGDEVDLNRIPIMQCWPDDAAPLITWGLTVTRGPHKERQNLGIYRQQLIGKNKLIMRWLSHRGGALDFQEWCQAHPGERFPVAVALGADPATILGAVTPVPDTLSEYAFAGLLRGTKTEVVKCLSNDLEIPASAEIVLEGYIEPGEMAPEGPYGDHTGYYNEIDNFPVFTVTHVTQRENAIYHSTYTGRPPDEPAVLGVALNEVLVPILQKQFPEIVDFYLPPEGCSYRLAVVTMRKQYAGHAKRVMMGVWSFLRQFMYTKFVIVCDDDINARDWNDVIWAITTRMDPARDTVMVENTPIDYLDFASPVSGLGSKMGLDATNKWPGETQREWGTPIKKDPNVTARIDAIWDELAIFHDGKGA.

Mn(2+) is bound at residue asparagine 172. Residues 175–177 (IYR), 189–191 (RWL), and 194–195 (RG) each bind prenylated FMN. Glutamate 238 lines the Mn(2+) pocket. Catalysis depends on aspartate 287, which acts as the Proton donor.

It belongs to the UbiD family. As to quaternary structure, homohexamer. It depends on prenylated FMN as a cofactor. Mn(2+) is required as a cofactor.

Its subcellular location is the cell membrane. The enzyme catalyses a 4-hydroxy-3-(all-trans-polyprenyl)benzoate + H(+) = a 2-(all-trans-polyprenyl)phenol + CO2. The protein operates within cofactor biosynthesis; ubiquinone biosynthesis. Functionally, catalyzes the decarboxylation of 3-octaprenyl-4-hydroxy benzoate to 2-octaprenylphenol, an intermediate step in ubiquinone biosynthesis. This chain is 3-octaprenyl-4-hydroxybenzoate carboxy-lyase, found in Cronobacter sakazakii (strain ATCC BAA-894) (Enterobacter sakazakii).